Reading from the N-terminus, the 411-residue chain is Intracellular hyaluronan-binding protein 4 (411 aa).

Phosphoserine is present on residues Ser7 and Ser36. Positions Leu42 to Ala62 form a coiled coil. Residues Leu42–Ser271 are disordered. An Omega-N-methylarginine modification is found at Arg70. The residue at position 74 (Ser74) is a Phosphoserine. The span at Gly87–Ser97 shows a compositional bias: basic and acidic residues. Position 108 is a phosphoserine (Ser108). Basic and acidic residues-rich tracts occupy residues Val138 to Leu181 and Asp205 to Asp229. Glycyl lysine isopeptide (Lys-Gly) (interchain with G-Cter in SUMO1); alternate cross-links involve residues Lys212 and Lys274. Residues Lys212 and Lys274 each participate in a glycyl lysine isopeptide (Lys-Gly) (interchain with G-Cter in SUMO2); alternate cross-link. Positions Glu279–Thr301 form a coiled coil. A compositionally biased stretch (basic and acidic residues) spans Asn296–Glu313. The disordered stretch occupies residues Asn296–Ser318. Lys334 is covalently cross-linked (Glycyl lysine isopeptide (Lys-Gly) (interchain with G-Cter in SUMO1); alternate). Residue Lys334 forms a Glycyl lysine isopeptide (Lys-Gly) (interchain with G-Cter in SUMO2); alternate linkage. Thr352 and Thr373 each carry phosphothreonine; by PKC. Residues Asn358–Ala411 are disordered. Acidic residues predominate over residues Asp402 to Ala411.

Belongs to the SERBP1-HABP4 family. In terms of assembly, associates with ribosomes; promoting ribosome stabilization. Interacts with EEF2/eEF2; promoting ribosome stabilization. Interacts with FMR1. Interacts with FXR1 and FXR2. Interacts with CHD3 (via C-terminus). Interacts (via C-terminus) with RACK1. Interacts with p53/TP53. Interacts (via N-terminus) with SRSF9; this interaction is direct. Interacts with SYNCRIP; this interaction is direct. Interacts with MEF2C (via N-terminus); this interaction decreases DNA-binding activity of MEF2C in myocardial cells in response to mechanical stress. Interacts with PRMT1 (via N-terminus). Interacts with SPIN1. In terms of processing, phosphorylated by phorbol 12-myristate 13-acetate (PMA)-activated PKC isoforms at Thr-352 and Thr-373. Post-translationally, methylated. Methylation is decreased by phorbol 12-myristate 13-acetate (PMA)-activated PKC, in vitro. In terms of tissue distribution, expressed in adult heart, brain, liver, kidney, testis, and in various embryonic tissues, but not in adult spleen, lung or skeletal muscle.

The protein localises to the nucleus. The protein resides in the cytoplasm. It is found in the stress granule. It localises to the sarcoplasm. Its subcellular location is the nuclear body. The protein localises to the nucleolus. The protein resides in the nucleus speckle. It is found in the cajal body. It localises to the gem. Ribosome-binding protein that promotes ribosome hibernation, a process during which ribosomes are stabilized in an inactive state and preserved from proteasomal degradation. Acts via its association with EEF2/eEF2 factor at the A-site of the ribosome, promoting ribosome stabilization in an inactive state compatible with storage. Plays a key role in ribosome hibernation in the mature oocyte by promoting ribosome stabilization. Ribosomes, which are produced in large quantities during oogenesis, are stored and translationally repressed in the oocyte and early embryo. Also binds RNA, regulating transcription and pre-mRNA splicing. Binds (via C-terminus) to poly(U) RNA. Seems to play a role in PML-nuclear bodies formation. Negatively regulates DNA-binding activity of the transcription factor MEF2C in myocardial cells in response to mechanical stress. The chain is Intracellular hyaluronan-binding protein 4 from Mus musculus (Mouse).